We begin with the raw amino-acid sequence, 651 residues long: Chaperone protein HtpG (651 aa).

An a; substrate-binding region spans residues 1–353 (MAAHVEQLEF…AQDMSLNVSR (353 aa)). Positions 354–569 (EILQQDRQIR…TFGITPALAR (216 aa)) are b. The segment at 570–651 (MYRASGQPVP…RLTRTVGDQT (82 aa)) is c.

The protein belongs to the heat shock protein 90 family. As to quaternary structure, homodimer.

The protein resides in the cytoplasm. Its function is as follows. Molecular chaperone. Has ATPase activity. This Mycolicibacterium vanbaalenii (strain DSM 7251 / JCM 13017 / BCRC 16820 / KCTC 9966 / NRRL B-24157 / PYR-1) (Mycobacterium vanbaalenii) protein is Chaperone protein HtpG.